Reading from the N-terminus, the 170-residue chain is Acireductone dioxygenase (170 aa).

Fe(2+) is bound by residues His-99, His-101, Glu-105, and His-144. His-99, His-101, Glu-105, and His-144 together coordinate Ni(2+).

This sequence belongs to the acireductone dioxygenase (ARD) family. In terms of assembly, monomer. Fe(2+) is required as a cofactor. Requires Ni(2+) as cofactor.

The catalysed reaction is 1,2-dihydroxy-5-(methylsulfanyl)pent-1-en-3-one + O2 = 3-(methylsulfanyl)propanoate + CO + formate + 2 H(+). It carries out the reaction 1,2-dihydroxy-5-(methylsulfanyl)pent-1-en-3-one + O2 = 4-methylsulfanyl-2-oxobutanoate + formate + 2 H(+). The protein operates within amino-acid biosynthesis; L-methionine biosynthesis via salvage pathway; L-methionine from S-methyl-5-thio-alpha-D-ribose 1-phosphate: step 5/6. Functionally, catalyzes 2 different reactions between oxygen and the acireductone 1,2-dihydroxy-3-keto-5-methylthiopentene (DHK-MTPene) depending upon the metal bound in the active site. Fe-containing acireductone dioxygenase (Fe-ARD) produces formate and 2-keto-4-methylthiobutyrate (KMTB), the alpha-ketoacid precursor of methionine in the methionine recycle pathway. Ni-containing acireductone dioxygenase (Ni-ARD) produces methylthiopropionate, carbon monoxide and formate, and does not lie on the methionine recycle pathway. This chain is Acireductone dioxygenase, found in Bacillus cereus (strain ZK / E33L).